The chain runs to 377 residues: Glutamate 5-kinase (377 aa).

K20 is an ATP binding site. The substrate site is built by S60, D147, and N159. An ATP-binding site is contributed by 179-180 (TD). Residues 285–363 (AGRLVIDDGA…DKVYQVLGEA (79 aa)) enclose the PUA domain.

This sequence belongs to the glutamate 5-kinase family.

The protein localises to the cytoplasm. The enzyme catalyses L-glutamate + ATP = L-glutamyl 5-phosphate + ADP. It participates in amino-acid biosynthesis; L-proline biosynthesis; L-glutamate 5-semialdehyde from L-glutamate: step 1/2. Functionally, catalyzes the transfer of a phosphate group to glutamate to form L-glutamate 5-phosphate. This Acinetobacter baumannii (strain SDF) protein is Glutamate 5-kinase.